Reading from the N-terminus, the 124-residue chain is MVPLIVAVSVGGIAGTLLRFATGNWVNANWPRHFYTATLAVNIVGCLLIGVLYGLFLIRPEVPIEVRAGLMVGFLGGLTTFSSFSLDTVRLLESGQVPLALGYAAISVFGGLLATWAGLSLTKL.

4 helical membrane passes run 1 to 21, 38 to 58, 69 to 89, and 99 to 119; these read MVPL…LRFA, TLAV…LFLI, GLMV…LDTV, and LALG…WAGL. Positions 76 and 79 each coordinate Na(+).

It belongs to the fluoride channel Fluc/FEX (TC 1.A.43) family.

Its subcellular location is the cell inner membrane. The catalysed reaction is fluoride(in) = fluoride(out). Its activity is regulated as follows. Na(+) is not transported, but it plays an essential structural role and its presence is essential for fluoride channel function. Functionally, fluoride-specific ion channel. Important for reducing fluoride concentration in the cell, thus reducing its toxicity. This is Fluoride-specific ion channel FluC from Pseudomonas fluorescens (strain Pf0-1).